The chain runs to 64 residues: Translation machinery-associated protein 7 homolog (64 aa).

The segment at 1-64 (MSGRQGGKAK…GGGIKKSGKK (64 aa)) is disordered. Residues 21 to 50 (DLSEEDVEFKKKQQEEAKKIKEMAAKAGQR) are a coiled coil. Basic and acidic residues predominate over residues 28-44 (EFKKKQQEEAKKIKEMA). The span at 53-64 (LLGGGIKKSGKK) shows a compositional bias: gly residues.

Belongs to the TMA7 family.

The chain is Translation machinery-associated protein 7 homolog from Caenorhabditis elegans.